We begin with the raw amino-acid sequence, 265 residues long: Glycosylphosphatidylinositol anchor biosynthesis protein 11 (265 aa).

Transmembrane regions (helical) follow at residues 49–69 (LLVVPFHNIFILVGMFYSGLT) and 79–99 (GFLTSIPIQVIYNYIIYINLL). N-linked (GlcNAc...) asparagine glycosylation is found at Asn-111 and Asn-112. A run of 4 helical transmembrane segments spans residues 137 to 157 (IFVSIVLSLPLFVVIILMGAP), 166 to 186 (LYLSLHLSQLIFNPLIILSNL), 209 to 229 (ILSSVLLTLGGCWLGVIPIPL), and 240 to 260 (ITLLVGGYLGGVVGGVLSLIV).

Belongs to the PIGF family.

The protein localises to the endoplasmic reticulum membrane. The protein operates within glycolipid biosynthesis; glycosylphosphatidylinositol-anchor biosynthesis. Acts in the GPI biosynthetic pathway between GlcNAc-PI synthesis and GPI transfer to protein. The polypeptide is Glycosylphosphatidylinositol anchor biosynthesis protein 11 (GPI11) (Candida albicans (strain SC5314 / ATCC MYA-2876) (Yeast)).